Reading from the N-terminus, the 295-residue chain is UDP-N-acetylenolpyruvoylglucosamine reductase (295 aa).

One can recognise an FAD-binding PCMH-type domain in the interval 23 to 188; sequence KVGGPADFLA…ISAKFALKPG (166 aa). Residue Arg-167 is part of the active site. Residue Ser-217 is the Proton donor of the active site. Glu-287 is a catalytic residue.

This sequence belongs to the MurB family. The cofactor is FAD.

Its subcellular location is the cytoplasm. The catalysed reaction is UDP-N-acetyl-alpha-D-muramate + NADP(+) = UDP-N-acetyl-3-O-(1-carboxyvinyl)-alpha-D-glucosamine + NADPH + H(+). Its pathway is cell wall biogenesis; peptidoglycan biosynthesis. In terms of biological role, cell wall formation. The chain is UDP-N-acetylenolpyruvoylglucosamine reductase from Streptococcus pyogenes serotype M12 (strain MGAS9429).